Here is a 282-residue protein sequence, read N- to C-terminus: ATP phosphoribosyltransferase (282 aa).

The protein belongs to the ATP phosphoribosyltransferase family. Long subfamily. It depends on Mg(2+) as a cofactor.

It localises to the cytoplasm. The catalysed reaction is 1-(5-phospho-beta-D-ribosyl)-ATP + diphosphate = 5-phospho-alpha-D-ribose 1-diphosphate + ATP. It participates in amino-acid biosynthesis; L-histidine biosynthesis; L-histidine from 5-phospho-alpha-D-ribose 1-diphosphate: step 1/9. Its activity is regulated as follows. Feedback inhibited by histidine. Catalyzes the condensation of ATP and 5-phosphoribose 1-diphosphate to form N'-(5'-phosphoribosyl)-ATP (PR-ATP). Has a crucial role in the pathway because the rate of histidine biosynthesis seems to be controlled primarily by regulation of HisG enzymatic activity. The polypeptide is ATP phosphoribosyltransferase (Pyrobaculum calidifontis (strain DSM 21063 / JCM 11548 / VA1)).